Here is a 239-residue protein sequence, read N- to C-terminus: Demethylmenaquinone methyltransferase (239 aa).

Residues threonine 68, aspartate 86, and 111 to 112 (NG) each bind S-adenosyl-L-methionine.

This sequence belongs to the class I-like SAM-binding methyltransferase superfamily. MenG/UbiE family.

The catalysed reaction is a 2-demethylmenaquinol + S-adenosyl-L-methionine = a menaquinol + S-adenosyl-L-homocysteine + H(+). It functions in the pathway quinol/quinone metabolism; menaquinone biosynthesis; menaquinol from 1,4-dihydroxy-2-naphthoate: step 2/2. Functionally, methyltransferase required for the conversion of demethylmenaquinol (DMKH2) to menaquinol (MKH2). The protein is Demethylmenaquinone methyltransferase of Tropheryma whipplei (strain TW08/27) (Whipple's bacillus).